The primary structure comprises 489 residues: UDP-N-acetylmuramate--L-alanine ligase (489 aa).

128–134 (GTHGKTT) is an ATP binding site.

Belongs to the MurCDEF family.

The protein localises to the cytoplasm. The catalysed reaction is UDP-N-acetyl-alpha-D-muramate + L-alanine + ATP = UDP-N-acetyl-alpha-D-muramoyl-L-alanine + ADP + phosphate + H(+). It functions in the pathway cell wall biogenesis; peptidoglycan biosynthesis. Its function is as follows. Cell wall formation. The sequence is that of UDP-N-acetylmuramate--L-alanine ligase from Shewanella woodyi (strain ATCC 51908 / MS32).